Consider the following 172-residue polypeptide: 3-hydroxydecanoyl-[acyl-carrier-protein] dehydratase (172 aa).

H71 is a catalytic residue.

The protein belongs to the thioester dehydratase family. FabA subfamily. Homodimer.

Its subcellular location is the cytoplasm. The catalysed reaction is a (3R)-hydroxyacyl-[ACP] = a (2E)-enoyl-[ACP] + H2O. The enzyme catalyses (3R)-hydroxydecanoyl-[ACP] = (2E)-decenoyl-[ACP] + H2O. It catalyses the reaction (2E)-decenoyl-[ACP] = (3Z)-decenoyl-[ACP]. It functions in the pathway lipid metabolism; fatty acid biosynthesis. Functionally, necessary for the introduction of cis unsaturation into fatty acids. Catalyzes the dehydration of (3R)-3-hydroxydecanoyl-ACP to E-(2)-decenoyl-ACP and then its isomerization to Z-(3)-decenoyl-ACP. Can catalyze the dehydratase reaction for beta-hydroxyacyl-ACPs with saturated chain lengths up to 16:0, being most active on intermediate chain length. The chain is 3-hydroxydecanoyl-[acyl-carrier-protein] dehydratase from Salmonella arizonae (strain ATCC BAA-731 / CDC346-86 / RSK2980).